A 137-amino-acid polypeptide reads, in one-letter code: Large ribosomal subunit protein uL16 (137 aa).

This sequence belongs to the universal ribosomal protein uL16 family. Part of the 50S ribosomal subunit.

Functionally, binds 23S rRNA and is also seen to make contacts with the A and possibly P site tRNAs. The protein is Large ribosomal subunit protein uL16 of Baumannia cicadellinicola subsp. Homalodisca coagulata.